Reading from the N-terminus, the 141-residue chain is ATP synthase epsilon chain (141 aa).

Belongs to the ATPase epsilon chain family. In terms of assembly, F-type ATPases have 2 components, CF(1) - the catalytic core - and CF(0) - the membrane proton channel. CF(1) has five subunits: alpha(3), beta(3), gamma(1), delta(1), epsilon(1). CF(0) has three main subunits: a, b and c.

The protein localises to the cell inner membrane. Produces ATP from ADP in the presence of a proton gradient across the membrane. In Burkholderia thailandensis (strain ATCC 700388 / DSM 13276 / CCUG 48851 / CIP 106301 / E264), this protein is ATP synthase epsilon chain.